The chain runs to 369 residues: Putative FAD-dependent oxidoreductase LodB (369 aa).

FAD is bound by residues 10-14 (GGGPA) and Arg-103.

The cofactor is FAD.

Its subcellular location is the cytoplasm. Is required for lysine-epsilon oxidase (LOD) activity in M.mediterranea. May be involved in the generation of the quinonic cofactor of LodA, leading to the active form of LodA containing a tyrosine-derived quinone cofactor. This Marinomonas mediterranea (strain ATCC 700492 / JCM 21426 / NBRC 103028 / MMB-1) protein is Putative FAD-dependent oxidoreductase LodB (lodB).